The chain runs to 81 residues: MSHTVKIYDTCIGCTQCVRACPTDVLEMVPWDGCKAGQIASSPRVEDCVGCKRCETACPTDFLSVRVYLGAETTRSLGLAY.

4Fe-4S ferredoxin-type domains are found at residues 2 to 31 and 37 to 68; these read SHTVKIYDTCIGCTQCVRACPTDVLEMVPW and GQIASSPRVEDCVGCKRCETACPTDFLSVRVY. Positions 11, 14, 17, 21, 48, 51, 54, and 58 each coordinate [4Fe-4S] cluster.

As to quaternary structure, the eukaryotic PSI reaction center is composed of at least 11 subunits. [4Fe-4S] cluster is required as a cofactor.

It localises to the plastid. The protein localises to the chloroplast thylakoid membrane. It carries out the reaction reduced [plastocyanin] + hnu + oxidized [2Fe-2S]-[ferredoxin] = oxidized [plastocyanin] + reduced [2Fe-2S]-[ferredoxin]. Apoprotein for the two 4Fe-4S centers FA and FB of photosystem I (PSI); essential for photochemical activity. FB is the terminal electron acceptor of PSI, donating electrons to ferredoxin. The C-terminus interacts with PsaA/B/D and helps assemble the protein into the PSI complex. Required for binding of PsaD and PsaE to PSI. PSI is a plastocyanin/cytochrome c6-ferredoxin oxidoreductase, converting photonic excitation into a charge separation, which transfers an electron from the donor P700 chlorophyll pair to the spectroscopically characterized acceptors A0, A1, FX, FA and FB in turn. This chain is Photosystem I iron-sulfur center, found in Phaeodactylum tricornutum (strain CCAP 1055/1).